Here is a 711-residue protein sequence, read N- to C-terminus: Polyribonucleotide nucleotidyltransferase (711 aa).

An FFRR loop; important for RNA binding region spans residues 77 to 80 (FFRR). The tract at residues 327 to 331 (LDVRT) is interaction with RNase E. 2 residues coordinate Mg(2+): Asp486 and Asp492. In terms of domain architecture, KH spans 553 to 612 (PRIHTIKINPDKIKDVIGKGGSVIRALTEETGTTIEIEDDGTVKIAATDGEKAKHAIRRI). The region spanning 622–690 (GRVYTGKVTR…RQGRIRLSIK (69 aa)) is the S1 motif domain. The disordered stretch occupies residues 689-711 (IKEATEQSQPAAAPEAPAAEQGE). A compositionally biased stretch (low complexity) spans 694–711 (EQSQPAAAPEAPAAEQGE).

The protein belongs to the polyribonucleotide nucleotidyltransferase family. In terms of assembly, component of the RNA degradosome, which is a multiprotein complex involved in RNA processing and mRNA degradation. Interacts with RNase E (rne). Homotrimer. The homotrimer forms a ring-like structure with a central channel, where RNA molecules can bind. RNA molecules bind between neighboring subunits. Might interact with YicC. It depends on Mg(2+) as a cofactor. The cofactor is Mn(2+).

The protein resides in the cytoplasm. The enzyme catalyses RNA(n+1) + phosphate = RNA(n) + a ribonucleoside 5'-diphosphate. Its function is as follows. Involved in mRNA degradation. Catalyzes the phosphorolysis of single-stranded polyribonucleotides processively in the 3'- to 5'-direction. Also involved, along with RNase II, in tRNA processing. RNases II and R contribute to rRNA degradation during starvation, while RNase R and PNPase are the major contributors to quality control of rRNA during steady state growth. Contributes to degradation of some small RNAs (sRNA). This chain is Polyribonucleotide nucleotidyltransferase, found in Escherichia coli (strain K12).